Reading from the N-terminus, the 340-residue chain is MTSLIRSNSWGSFVQTITSSSNRLYIGWFGLLVFPLLSLATVAYITAFFLAPAVDIDGIREPVAGSLIYGNNIISGAVIPSSNAIGVHFYPLWESLGLDEWLYNGGTYQFVVFHFFLGVCGWMGREWEFSYRLGMRPWIFVAFSAPIAAAAAVFIIYPIGQGSFSDGMPLGIQGTFNFMLVFQAEHKILMHPFHILGVAGVFGGSLFSAMHGSLVSSSLLAETAGSESLNNGYVFGQEDETYSISAAHAYFGRLIFQYASFNNSRSLHFFLAAWPVIGIWFTSLGVATMAFNLNGFNFNQSILDESGHYINSWADILNRADLGIEVMHERNAHNFPLDLA.

3 helical membrane-spanning segments follow: residues 25-42 (YIGW…LATV), 114-129 (HFFL…EWEF), and 138-152 (WIFV…AAAA). Chlorophyll a is bound at residue H114. Residue W122 participates in pheophytin a binding. Residues D166 and E185 each coordinate [CaMn4O5] cluster. The helical transmembrane segment at 193–214 (FHILGVAGVFGGSLFSAMHGSL) threads the bilayer. H194 is a binding site for chlorophyll a. A quinone is bound by residues H211 and 260-261 (SF). H211 contributes to the Fe cation binding site. H268 provides a ligand contact to Fe cation. Residues 270 to 284 (FLAAWPVIGIWFTSL) traverse the membrane as a helical segment. [CaMn4O5] cluster contacts are provided by H328, E329, D338, and A340.

Belongs to the reaction center PufL/M/PsbA/D family. As to quaternary structure, PSII is composed of 1 copy each of membrane proteins PsbA, PsbB, PsbC, PsbD, PsbE, PsbF, PsbH, PsbI, PsbJ, PsbK, PsbL, PsbM, PsbT, PsbX, PsbY, PsbZ, Psb30/Ycf12, at least 3 peripheral proteins of the oxygen-evolving complex and a large number of cofactors. It forms dimeric complexes. Requires The D1/D2 heterodimer binds P680, chlorophylls that are the primary electron donor of PSII, and subsequent electron acceptors. It shares a non-heme iron and each subunit binds pheophytin, quinone, additional chlorophylls, carotenoids and lipids. D1 provides most of the ligands for the Mn4-Ca-O5 cluster of the oxygen-evolving complex (OEC). There is also a Cl(-1) ion associated with D1 and D2, which is required for oxygen evolution. The PSII complex binds additional chlorophylls, carotenoids and specific lipids. as cofactor. In terms of processing, tyr-157 forms a radical intermediate that is referred to as redox-active TyrZ, YZ or Y-Z.

The protein localises to the plastid. Its subcellular location is the chloroplast thylakoid membrane. It carries out the reaction 2 a plastoquinone + 4 hnu + 2 H2O = 2 a plastoquinol + O2. Functionally, photosystem II (PSII) is a light-driven water:plastoquinone oxidoreductase that uses light energy to abstract electrons from H(2)O, generating O(2) and a proton gradient subsequently used for ATP formation. It consists of a core antenna complex that captures photons, and an electron transfer chain that converts photonic excitation into a charge separation. The D1/D2 (PsbA/PsbD) reaction center heterodimer binds P680, the primary electron donor of PSII as well as several subsequent electron acceptors. The chain is Photosystem II protein D1 from Amphidinium operculatum (Dinoflagellate).